The following is a 1266-amino-acid chain: Intermembrane phospholipid transporter YhdP (1266 aa).

Topologically, residues 1 to 5 (MRRLP) are cytoplasmic. The chain crosses the membrane as a helical span at residues 6–26 (GILLLTGAALVVIAALLVSGL). The Periplasmic portion of the chain corresponds to 27 to 1266 (RIALPHLDAW…LRQPRKEKAQ (1240 aa)). Residues 94–103 (VWQSLLHMRW) form a P-helix region. The interval 1121-1144 (HAGQLLRLLSVDALMRKLRFDFRD) is C-helix_2. The interval 1203–1237 (ISATVGVAAAFAVNPIVGAAVFAASKVLGPLWSKV) is C-helix_1.

Its subcellular location is the cell inner membrane. Functionally, involved in outer membrane lipid homeostasis. Likely transports phospholipids between the inner membrane and the outer membrane. It would provide a bridge-like structure that protects phospholipids as they travel across the periplasm. The phosphate-containing molecules are captured along the length of a hydrophobic groove that is continuous along all but the extreme N-terminus of the protein. It also appears to control, directly or indirectly, levels of cyclic enterobacterial common antigen (cyclic ECA), a soluble cyclic ECA molecule present in the periplasm. Its function is as follows. TamB, YdbH and YhdP are redundant, but not equivalent, in performing an essential function for growth and maintaining lipid homeostasis in the outer membrane. The transport functions of TamB and YhdP could be differentiated according to the fatty acid saturation state of the phospholipids, with TamB transporting more unsaturated phospholipids and YhdP more saturated phospholipids. Any of these three proteins is sufficient for growth. The protein is Intermembrane phospholipid transporter YhdP (yhdP) of Escherichia coli (strain K12).